Here is a 344-residue protein sequence, read N- to C-terminus: Selenide, water dikinase (344 aa).

Cys15 is an active-site residue. ATP-binding positions include Lys18 and 46-48 (TKD). A Mg(2+)-binding site is contributed by Asp49. ATP contacts are provided by residues Asp66, Asp89, and 137 to 139 (GHS). Asp89 provides a ligand contact to Mg(2+). Position 225 (Asp225) interacts with Mg(2+).

Belongs to the selenophosphate synthase 1 family. Class I subfamily. As to quaternary structure, homodimer. It depends on Mg(2+) as a cofactor.

The catalysed reaction is hydrogenselenide + ATP + H2O = selenophosphate + AMP + phosphate + 2 H(+). Synthesizes selenophosphate from selenide and ATP. The protein is Selenide, water dikinase of Colwellia psychrerythraea (strain 34H / ATCC BAA-681) (Vibrio psychroerythus).